We begin with the raw amino-acid sequence, 361 residues long: MAGATAATPMDIDAAAPPPGAAAKGKAPLSSTPGGRAAPWVEKYRPQSLGDVAAHRDIVDTIDRLTNENRLPHLLLYGPPGTGKTSTILAVARKLYGSQYGNMILELNASDERGIDVVRQQIQDFASARSLSFGAKQSVKMVLLDEADAMTKDAQFALRRVIEKHTRSTRFALICNHVNKIIPALQSRCTRFRFAPLDGTHVRERLKHIIQSEGLDVDDGGLTALVRLSNGDMRKALNILQSTHMASKQITEEAVYLCTGNPMPKDIEQIAYWLLNESFSTSFKCISDMKMRKGLALVDIIREVTMFVFKIQMPSDVRIKLINDLADIEYRLSFACNDKLQLGALISTFTGARTAMVAAAH.

The segment covering 1 to 28 has biased composition (low complexity); it reads MAGATAATPMDIDAAAPPPGAAAKGKAP. Residues 1–39 are disordered; the sequence is MAGATAATPMDIDAAAPPPGAAAKGKAPLSSTPGGRAAP. Residue 77 to 84 participates in ATP binding; sequence YGPPGTGK.

Belongs to the activator 1 small subunits family. In terms of assembly, heterotetramer of subunits RFC2, RFC3, RFC4 and RFC5 that can form a complex with RFC1. In terms of tissue distribution, expressed in roots, leaves, shoot apical meristem (SAM), flag leaves and panicles.

Its subcellular location is the nucleus. Its function is as follows. May be involved in DNA replication and thus regulate cell proliferation. This is Replication factor C subunit 3 (RFC3) from Oryza sativa subsp. japonica (Rice).